The following is a 231-amino-acid chain: 2,3,4,5-tetrahydropyridine-2,6-dicarboxylate N-acetyltransferase (231 aa).

This sequence belongs to the transferase hexapeptide repeat family. DapH subfamily.

The enzyme catalyses (S)-2,3,4,5-tetrahydrodipicolinate + acetyl-CoA + H2O = L-2-acetamido-6-oxoheptanedioate + CoA. It functions in the pathway amino-acid biosynthesis; L-lysine biosynthesis via DAP pathway; LL-2,6-diaminopimelate from (S)-tetrahydrodipicolinate (acetylase route): step 1/3. In terms of biological role, catalyzes the transfer of an acetyl group from acetyl-CoA to tetrahydrodipicolinate. The sequence is that of 2,3,4,5-tetrahydropyridine-2,6-dicarboxylate N-acetyltransferase from Thermosipho melanesiensis (strain DSM 12029 / CIP 104789 / BI429).